The chain runs to 409 residues: E3 ubiquitin-protein ligase MARCHF4 (409 aa).

A signal peptide spans 1-17; it reads MLMPLGGLLWWWCCCCG. The interval 92–133 is disordered; sequence GPREAVGRETPPLPPPPPLPPSGDDDWDGPATGPPASLLSSA. Positions 102-112 are enriched in pro residues; that stretch reads PPLPPPPPLPP. An RING-CH-type zinc finger spans residues 154–214; that stretch reads DSGMRTPLCR…ELCYYKYHVI (61 aa). Positions 162, 165, 178, 180, 188, 191, 204, and 207 each coordinate Zn(2+). 2 helical membrane passes run 242–262 and 271–291; these read LGSLFLIASISWLIWSTFSPS and LFQICYGMYGFMDVVCIGLII. Disordered stretches follow at residues 323–372 and 389–409; these read EDQK…GPVS and PHDQRSTQGSGRELVMRVTTV. A compositionally biased stretch (polar residues) spans 328 to 343; it reads GGRTNLQTSSSAQANL.

It is found in the golgi apparatus membrane. It carries out the reaction S-ubiquitinyl-[E2 ubiquitin-conjugating enzyme]-L-cysteine + [acceptor protein]-L-lysine = [E2 ubiquitin-conjugating enzyme]-L-cysteine + N(6)-ubiquitinyl-[acceptor protein]-L-lysine.. It participates in protein modification; protein ubiquitination. In terms of biological role, E3 ubiquitin-protein ligase that may mediate ubiquitination of MHC-I and CD4, and promote their subsequent endocytosis and sorting to lysosomes via multivesicular bodies. E3 ubiquitin ligases accept ubiquitin from an E2 ubiquitin-conjugating enzyme in the form of a thioester and then directly transfer the ubiquitin to targeted substrates. The chain is E3 ubiquitin-protein ligase MARCHF4 (Marchf4) from Mus musculus (Mouse).